A 554-amino-acid chain; its full sequence is Guanine nucleotide-binding protein alpha-2 subunit (554 aa).

Disordered stretches follow at residues 1–139 (MGLC…NNSN) and 157–183 (VNGN…THSG). G2 carries N-myristoyl glycine lipidation. Residue C4 is the site of S-palmitoyl cysteine attachment. 2 stretches are compositionally biased toward basic and acidic residues: residues 7–17 (KDSRESTHDGG) and 28–43 (ANRR…DKKQ). The segment covering 52–66 (GSIVNAASNINNSSS) has biased composition (low complexity). A compositionally biased stretch (polar residues) spans 67 to 85 (GKTKISTVSEDGTVSNGVG). Low complexity predominate over residues 91 to 139 (DNANNKNNGNNNNSNNNDNNNNNNNNIGNNINGNNNNDSENIHDSNNSN). Positions 228–554 (NALKVLLLGS…ENSLKDSGVL (327 aa)) constitute a G-alpha domain. Positions 231-244 (KVLLLGSGESGKST) are G1 motif. 14 residues coordinate GTP: E239, S240, G241, K242, S243, T244, D351, I376, T382, G405, N471, K472, D474, and A526. Residue S243 coordinates Mg(2+). Residues 374–382 (DVIRTRKKT) are G2 motif. Residue T382 coordinates Mg(2+). Residues 398–407 (LHFFDVGGQR) are G3 motif. The tract at residues 467–474 (VLFLNKID) is G4 motif. The segment at 524–529 (TQATDT) is G5 motif.

It belongs to the G-alpha family. As to quaternary structure, g proteins are composed of 3 units; alpha, beta and gamma. The alpha chain contains the guanine nucleotide binding site. Mg(2+) is required as a cofactor.

Its function is as follows. Guanine nucleotide-binding proteins (G proteins) are involved as modulators or transducers in various transmembrane signaling systems. This protein may be involved in the determination of the cAMP level according to nutritional conditions, most probably as a regulator of adenylyl cyclase. This is Guanine nucleotide-binding protein alpha-2 subunit (GPA2) from Kluyveromyces lactis (strain ATCC 8585 / CBS 2359 / DSM 70799 / NBRC 1267 / NRRL Y-1140 / WM37) (Yeast).